We begin with the raw amino-acid sequence, 319 residues long: ATP-dependent 6-phosphofructokinase (319 aa).

Residues Gly-11, 72–73 (RS), and 102–105 (GDGS) each bind ATP. Residue Asp-103 coordinates Mg(2+). 126 to 128 (TID) serves as a coordination point for substrate. Asp-128 acts as the Proton acceptor in catalysis. Arg-155 contacts ADP. Substrate contacts are provided by residues Arg-163 and 170 to 172 (MGR). 186 to 188 (GAE) serves as a coordination point for ADP. Substrate contacts are provided by residues Glu-223, Arg-245, and 251–254 (HTQR).

This sequence belongs to the phosphofructokinase type A (PFKA) family. ATP-dependent PFK group I subfamily. Prokaryotic clade 'B1' sub-subfamily. In terms of assembly, homotetramer. It depends on Mg(2+) as a cofactor.

The protein localises to the cytoplasm. The enzyme catalyses beta-D-fructose 6-phosphate + ATP = beta-D-fructose 1,6-bisphosphate + ADP + H(+). Its pathway is carbohydrate degradation; glycolysis; D-glyceraldehyde 3-phosphate and glycerone phosphate from D-glucose: step 3/4. Allosterically activated by ADP and other diphosphonucleosides, and allosterically inhibited by phosphoenolpyruvate. Its function is as follows. Catalyzes the phosphorylation of D-fructose 6-phosphate to fructose 1,6-bisphosphate by ATP, the first committing step of glycolysis. The polypeptide is ATP-dependent 6-phosphofructokinase (Sulfurimonas denitrificans (strain ATCC 33889 / DSM 1251) (Thiomicrospira denitrificans (strain ATCC 33889 / DSM 1251))).